The following is an 828-amino-acid chain: Periplasmic nitrate reductase (828 aa).

A signal peptide (tat-type signal) is located at residues 1-33; sequence MKLSRRDFMKANAAVAAAAAAGLTIPTVVQAAA. The region spanning 39–95 is the 4Fe-4S Mo/W bis-MGD-type domain; it reads IKWDKAPCRFCGTGCGVLVGTQNGRIVASQGDPEAAVNRGLSCIKGYFLPKIMYGKD. 4 residues coordinate [4Fe-4S] cluster: C46, C49, C53, and C81. Mo-bis(molybdopterin guanine dinucleotide) contacts are provided by residues K83, Q150, N175, C179, 212–219, 243–247, 262–264, M372, Q376, N482, 508–509, K531, D558, and 718–727; these read WGSNMAEM, STFEH, QTD, SD, and TGRVLEHWHT. Residue F794 participates in substrate binding. Residues N802 and K819 each contribute to the Mo-bis(molybdopterin guanine dinucleotide) site.

It belongs to the prokaryotic molybdopterin-containing oxidoreductase family. NasA/NapA/NarB subfamily. Component of the periplasmic nitrate reductase NapAB complex composed of NapA and NapB. Requires [4Fe-4S] cluster as cofactor. It depends on Mo-bis(molybdopterin guanine dinucleotide) as a cofactor. In terms of processing, predicted to be exported by the Tat system. The position of the signal peptide cleavage has not been experimentally proven.

It localises to the periplasm. It carries out the reaction 2 Fe(II)-[cytochrome] + nitrate + 2 H(+) = 2 Fe(III)-[cytochrome] + nitrite + H2O. In terms of biological role, catalytic subunit of the periplasmic nitrate reductase complex NapAB. Receives electrons from NapB and catalyzes the reduction of nitrate to nitrite. This is Periplasmic nitrate reductase from Serratia proteamaculans (strain 568).